The sequence spans 198 residues: uncharacterized protein (198 aa).

Disordered stretches follow at residues 15 to 69 (RLGQ…KDTR) and 172 to 198 (FSVKESSNLSNNDSDASLDEDTLLWGL). Composition is skewed to basic and acidic residues over residues 37-49 (HKSFENLGRDQSR) and 56-69 (FNEKQSTEPPKDTR). A compositionally biased stretch (low complexity) spans 176–186 (ESSNLSNNDSD). The span at 187–198 (ASLDEDTLLWGL) shows a compositional bias: acidic residues.

The protein resides in the nucleus. This is an uncharacterized protein from Schizosaccharomyces pombe (strain 972 / ATCC 24843) (Fission yeast).